A 38-amino-acid polypeptide reads, in one-letter code: Large ribosomal subunit protein bL36 (38 aa).

It belongs to the bacterial ribosomal protein bL36 family.

The protein is Large ribosomal subunit protein bL36 of Buchnera aphidicola subsp. Baizongia pistaciae (strain Bp).